The sequence spans 432 residues: Phosphomethylpyrimidine synthase (432 aa).

Substrate contacts are provided by residues asparagine 66, methionine 95, tyrosine 124, histidine 163, 185-187 (SRG), 226-229 (DGLR), and glutamate 265. Position 269 (histidine 269) interacts with Zn(2+). Residue tyrosine 292 participates in substrate binding. Histidine 333 is a Zn(2+) binding site. Cysteine 409, cysteine 412, and cysteine 416 together coordinate [4Fe-4S] cluster.

Belongs to the ThiC family. [4Fe-4S] cluster serves as cofactor.

It catalyses the reaction 5-amino-1-(5-phospho-beta-D-ribosyl)imidazole + S-adenosyl-L-methionine = 4-amino-2-methyl-5-(phosphooxymethyl)pyrimidine + CO + 5'-deoxyadenosine + formate + L-methionine + 3 H(+). The protein operates within cofactor biosynthesis; thiamine diphosphate biosynthesis. In terms of biological role, catalyzes the synthesis of the hydroxymethylpyrimidine phosphate (HMP-P) moiety of thiamine from aminoimidazole ribotide (AIR) in a radical S-adenosyl-L-methionine (SAM)-dependent reaction. This Moorella thermoacetica (strain ATCC 39073 / JCM 9320) protein is Phosphomethylpyrimidine synthase.